Here is a 214-residue protein sequence, read N- to C-terminus: Attacin (214 aa).

The first 19 residues, 1–19 (MSKSVALLLLCACLASGRH), serve as a signal peptide directing secretion. Residues 20–26 (VPTRARR) constitute a propeptide that is removed on maturation.

This sequence belongs to the attacin/sarcotoxin-2 family. As to expression, highest expression in fat body and hemocytes and to a much lesser extent in Malpighian tubules, silk gland and midgut.

The protein resides in the secreted. In terms of biological role, hemolymph antibacterial protein. Has a wide spectrum of activity against both Gram-positive and Gram-negative bacteria. The chain is Attacin from Bombyx mori (Silk moth).